The primary structure comprises 410 residues: uncharacterized protein (410 aa).

12 consecutive transmembrane segments (helical) span residues 27–47 (ILAL…VQSI), 63–83 (SLAL…TGPL), 97–117 (LFIA…ISIV), 118–138 (LLRA…MTYI), 145–165 (NSLS…GFLG), 180–200 (ISLM…LYFL), 228–248 (VLFF…TIFN), 254–274 (LMLE…TIYL), 293–313 (NNIL…TQYN), 316–332 (FIII…FFAS), 355–375 (YLFF…FFWF), and 378–398 (QWLG…FLSF).

The protein belongs to the major facilitator superfamily.

The protein localises to the cell membrane. This is an uncharacterized protein from Buchnera aphidicola subsp. Acyrthosiphon pisum (strain APS) (Acyrthosiphon pisum symbiotic bacterium).